Reading from the N-terminus, the 485-residue chain is MATCSRQFTSSSSMKGSCGIGGGSSRMSSVLAGGSCRAPSTYGGMSRFSSAGAYAVGSGYGGGFSSSSFGGGFGGGIGGGIGGGLGGGIGGGFGGGIGGGFGGGIGSGFGGGLGDGLLVGSEKVTMQNLNDRLATYLDKVRALEEANSDLEVKIRDWYQRQRPTEIKDYSPYFKTIEDLKSKILAATVDNANVLLQIDNARLAADDFRTKFETEQSLRINVESDINGLRRVLDELTLARADLEMQIESLKEELAYLKKNHEEEMASMRGQVGGDVNVEMDAAPGVDLSRILNEMRDQYEKMAEKNRKDAEDWFFTKTEELNREVATNSELVQSGKSEISELRRTMQNLEIELQSQLSMKASLENNLEETKGRYCMQLAQIQEMIGSVEEQLAQLRCEMEQQNQEYKILLDVKTRLEQEIATYRRLLEGEDAHLSSAQFSSSSQFSSGSQSSRDVTSTNRQIRTKVMDVHDGKVVSTHEQVLRTKN.

Positions 1 to 15 are enriched in polar residues; sequence MATCSRQFTSSSSMK. The interval 1 to 21 is disordered; that stretch reads MATCSRQFTSSSSMKGSCGIG. The segment at 1 to 121 is head; it reads MATCSRQFTS…GLGDGLLVGS (121 aa). Residues 122–157 are coil 1A; that stretch reads EKVTMQNLNDRLATYLDKVRALEEANSDLEVKIRDW. The region spanning 122–433 is the IF rod domain; sequence EKVTMQNLND…RLLEGEDAHL (312 aa). Residues 158 to 175 form a linker 1 region; it reads YQRQRPTEIKDYSPYFKT. The coil 1B stretch occupies residues 176–267; the sequence is IEDLKSKILA…KNHEEEMASM (92 aa). The tract at residues 268–290 is linker 12; it reads RGQVGGDVNVEMDAAPGVDLSRI. The coil 2 stretch occupies residues 291–429; sequence LNEMRDQYEK…ATYRRLLEGE (139 aa). The interval 430–485 is tail; that stretch reads DAHLSSAQFSSSSQFSSGSQSSRDVTSTNRQIRTKVMDVHDGKVVSTHEQVLRTKN. The interval 432–485 is interaction with Type I keratins and keratin filaments; it reads HLSSAQFSSSSQFSSGSQSSRDVTSTNRQIRTKVMDVHDGKVVSTHEQVLRTKN. Residues 437–451 show a composition bias toward low complexity; that stretch reads QFSSSSQFSSGSQSS. The tract at residues 437–458 is disordered; sequence QFSSSSQFSSGSQSSRDVTSTN. S448 is subject to Phosphoserine.

The protein belongs to the intermediate filament family. Heterotetramer of two type I and two type II keratins. Forms a disulfide-linked heterodimer (via 2B domains) with KRT5 (via 2B domains). Forms a heterodimer with KRT1; the interaction is more abundant in the absence of KRT5. Interacts with TRADD and with keratin filaments. Associates with other type I keratins. Interacts with EPPK1. Interacts with KLHL24. Interacts with PKP1 (via N-terminus) and PKP2. Post-translationally, a disulfide bond is formed between rather than within filaments and promotes the formation of a keratin filament cage around the nucleus. Ubiquitinated by the BCR(KLHL24) E3 ubiquitin ligase complex. In terms of tissue distribution, expressed in most cells of squamous cell carcinomas, in spinous and suprabasal cells around the branching papillary region of papillomas, and weakly in a few proliferative cells of hyperplastic tissue.

It localises to the cytoplasm. The protein localises to the nucleus. Functionally, the nonhelical tail domain is involved in promoting KRT5-KRT14 filaments to self-organize into large bundles and enhances the mechanical properties involved in resilience of keratin intermediate filaments in vitro. The sequence is that of Keratin, type I cytoskeletal 14 (Krt14) from Rattus norvegicus (Rat).